Consider the following 619-residue polypeptide: UPF0329 protein ECU08_2070 (619 aa).

Composition is skewed to basic and acidic residues over residues 350-359 (EREKREESKG) and 369-385 (GAGEAKEESKEEDRKEE). A disordered region spans residues 350–425 (EREKREESKG…REKKMGEEHH (76 aa)). Residues 386-396 (EGVEVEEEESA) are compositionally biased toward acidic residues.

This sequence belongs to the UPF0329 family.

The polypeptide is UPF0329 protein ECU08_2070 (Encephalitozoon cuniculi (strain GB-M1) (Microsporidian parasite)).